The primary structure comprises 1407 residues: Adenylate cyclase, aggregation specific (1407 aa).

Residues 1-219 (MASSSPMFND…KGYLHQHYNS (219 aa)) lie on the Cytoplasmic side of the membrane. Residues 28–131 (NELHDGNGGG…SNSVANGGHL (104 aa)) are disordered. Residues 51–63 (LNKSQNQPYTQYN) are compositionally biased toward polar residues. Residues 64–75 (NGGGGGGGGGGH) are compositionally biased toward gly residues. Composition is skewed to low complexity over residues 80 to 90 (HLNLNSITNNH) and 98 to 115 (PNTLSTPHNNNHNNNNHS). Helical transmembrane passes span 220–240 (QIMLLRITNLIGIVAVSYGFT), 244–264 (IFMLIAIRILCFNLFAFSIFL), 276–296 (LFHPLFLFSFTTFFITILLEY), 304–324 (ILFLYVVIFCCLYALGCLLFI), 325–345 (WMVMCNLMNAICFIIFIFLES), and 353–373 (ISFVIYILTMFLVGASHLYVL). Residues 374-962 (EKFRKESFIA…KYVIINNVVE (589 aa)) lie on the Cytoplasmic side of the membrane. A Guanylate cyclase 1 domain is found at 438–661 (SILCFDIVQF…DTIARSHTLE (224 aa)). Aspartate 443, isoleucine 444, and aspartate 488 together coordinate Mg(2+). Disordered regions lie at residues 502 to 590 (AKKQ…EEIE), 751 to 799 (KSNN…VLGE), and 828 to 876 (NDIV…EEDF). Low complexity-rich tracts occupy residues 505–526 (QMPNSKSTPLLQSTSSTSVNNI), 535–581 (NNNN…NNSG), and 752–795 (SNNN…SSSS). Over residues 828–846 (NDIVSPSLTSNSPILDTTV) the composition is skewed to polar residues. Over residues 847-871 (NNNNNNNNTNNNNKNQNNIYGNNNN) the composition is skewed to low complexity. 5 helical membrane-spanning segments follow: residues 963–979 (TKFFLVIGLILHLMFYL), 992–1012 (SNVIYLVMGIAFLVYIGLSFT), 1018–1038 (PLVYQIAFFILLCAFGVCTVL), 1071–1091 (LSVLFLNLFIFSFFIICSILI), and 1105–1125 (IGFVIVLLIQICSSYGMKLAM). Residues 1189–1311 (SIMFIQIAGF…DTANTASRMQ (123 aa)) enclose the Guanylate cyclase 2 domain. A helical transmembrane segment spans residues 1378–1398 (ATPAGIASPLSGTLLGEIGSF). Topologically, residues 1399-1407 (TTPRFHLSS) are cytoplasmic.

Belongs to the adenylyl cyclase class-4/guanylyl cyclase family. Mg(2+) serves as cofactor. As to expression, expressed throughout the structure in the tipped mound and finger. Expressed primarily in the prestalk region of the slug. In the early culminant expression is increased in the posterior prespore and anterior-most regions and expands into the developing stalk. In the mid and late culminant it is expressed throughout the stalk.

Its subcellular location is the membrane. The protein localises to the cell projection. It localises to the uropodium. The catalysed reaction is ATP = 3',5'-cyclic AMP + diphosphate. Its activity is regulated as follows. Regulated by cyclic AMP receptor 1 through a guanine nucleotide binding protein and protein CRAC. Both positively and negatively regulated by extracellular cAMP; this regulation is part of the mechanism that establishes the oscillatory cAMP waves during aggregation. In terms of biological role, coordinates cell aggregation by synthesizing the cAMP that influences differentiation and morphogenesis of cells within a developing multicellular structure. In Dictyostelium discoideum (Social amoeba), this protein is Adenylate cyclase, aggregation specific (acaA).